We begin with the raw amino-acid sequence, 232 residues long: UPF0235 protein At5g63440 (232 aa).

This sequence belongs to the UPF0235 family. Interacts with CTN.

Its subcellular location is the nucleus speckle. Functionally, may play a role during early embryonic development. Probably involved in pre-mRNA splicing. The sequence is that of UPF0235 protein At5g63440 from Arabidopsis thaliana (Mouse-ear cress).